A 226-amino-acid polypeptide reads, in one-letter code: Ribonuclease 3 (226 aa).

Residues 6–128 (INRLQRKLGY…LIGGIFLDSD (123 aa)) form the RNase III domain. Glutamate 41 is a binding site for Mg(2+). Residue aspartate 45 is part of the active site. Aspartate 114 and glutamate 117 together coordinate Mg(2+). Glutamate 117 is a catalytic residue. The DRBM domain occupies 155 to 225 (DPKTRLQEYL…AEQALKQLEL (71 aa)).

The protein belongs to the ribonuclease III family. As to quaternary structure, homodimer. Requires Mg(2+) as cofactor.

The protein resides in the cytoplasm. It catalyses the reaction Endonucleolytic cleavage to 5'-phosphomonoester.. In terms of biological role, digests double-stranded RNA. Involved in the processing of primary rRNA transcript to yield the immediate precursors to the large and small rRNAs (23S and 16S). Processes some mRNAs, and tRNAs when they are encoded in the rRNA operon. Processes pre-crRNA and tracrRNA of type II CRISPR loci if present in the organism. In Yersinia enterocolitica serotype O:8 / biotype 1B (strain NCTC 13174 / 8081), this protein is Ribonuclease 3.